The chain runs to 467 residues: Iroquois-class homeodomain protein irx-1 (467 aa).

Residues 126 to 188 (DPGRPKNATR…NARRRLKKEN (63 aa)) constitute a DNA-binding region (homeobox; TALE-type). Disordered regions lie at residues 198–307 (EDDN…PHNK), 319–342 (SPDG…PIQH), and 410–467 (SLSS…LPSA). Acidic residues-rich tracts occupy residues 215–225 (EDDEEIDLESI) and 233–244 (NDGEQSNEEEDE). Basic and acidic residues predominate over residues 245-262 (KLEHLRQGEKESFKKESE). Residues 415–431 (KTPERTSPKHSDRENLP) show a composition bias toward basic and acidic residues. Residues 447 to 460 (RENTLSQQEGTSRI) show a composition bias toward polar residues.

It belongs to the TALE/IRO homeobox family. As to expression, expressed in the neural plate in overlapping patterns with other irx members, which all share an anterior border of expression. Also expressed in the mesoderm, placodes and notochord. Broadly expressed in the tailbud rhombencephalon (hindbrain). Outside the nervous system and at tailbud stages, expressed in the developing otic vesicle, branchial arches, prospective heart region and pronephros.

The protein localises to the nucleus. Its function is as follows. Acts partially redundantly with other irx members in neural patterning. Required for formation of the posterior forebrain, midbrain, hindbrain, and to a lesser extent, spinal cord. Acts early in neural plate development to induce expression of some but not all proneural genes, and specify a neural precursor state. Also up-regulates repressors that prevent neuronal differentiation. Patterns the neuroectoderm in both the anterior/posterior and dorsal/ventral axes. Acts primarily as a transcriptional repressor during neural development, and binds to the bmp4 promoter to repress gene expression and thus mediate down-regulation of bmp4 by wnt signaling. Controls multiple processes through bmp4-repression including neural plate development, neural crest specification and Spemann organizer development. Involved in the specification of the preplacodal field at the anterior border of the neural plate. Regulates the genetic cascade of interactions that are necessary for positioning the isthmus organizer and the formation of the midbrain-hindbrain boundary. Required during at least two stages of pronephros kidney development; during neurula stages, maintains transcription of key renal genes to define the size and identity of the pronephric anlage, probably in part through regulation of bmp-signaling. Subsequently required for proper formation of the intermediate tubule segment of the pronephros. Acts principally as a transcriptional activator during pronephros development. This is Iroquois-class homeodomain protein irx-1 from Xenopus tropicalis (Western clawed frog).